We begin with the raw amino-acid sequence, 189 residues long: MTNSSIDSKSDLIRRDPVLGSRRLSNYWWATVILVGASGFFLVGISSYFGFNLVPFIKSEEILFIPQGLVMSFYGVAGILLSVYLWLTIIWNVGEGYNEYNKQDGIVRIFRWGFPGKNRRIDLVYPIQDVQAIRVEIKEGINPRRVIYLKIKGKREIPLTRIGQPLTLGEIEEKAANLARFLQVSIEGL.

The next 2 membrane-spanning stretches (helical) occupy residues 31–51 (TVILVGASGFFLVGISSYFGF) and 70–90 (VMSFYGVAGILLSVYLWLTII).

Belongs to the Ycf4 family.

It localises to the plastid. The protein resides in the chloroplast thylakoid membrane. Its function is as follows. Seems to be required for the assembly of the photosystem I complex. The protein is Photosystem I assembly protein Ycf4 of Chlorokybus atmophyticus (Soil alga).